Here is a 153-residue protein sequence, read N- to C-terminus: Transcriptional repressor NrdR (153 aa).

Residues 3–34 (CPYCNADDTKVIDSRLAAEGAQVRRRRQCNQC) fold into a zinc finger. One can recognise an ATP-cone domain in the interval 49-139 (PRIIKSNGRI…VYRDFQDIEA (91 aa)).

This sequence belongs to the NrdR family. The cofactor is Zn(2+).

Its function is as follows. Negatively regulates transcription of bacterial ribonucleotide reductase nrd genes and operons by binding to NrdR-boxes. In Psychrobacter sp. (strain PRwf-1), this protein is Transcriptional repressor NrdR.